The sequence spans 417 residues: Serine hydroxymethyltransferase (417 aa).

(6S)-5,6,7,8-tetrahydrofolate is bound by residues Leu121 and 125-127 (GHL). An N6-(pyridoxal phosphate)lysine modification is found at Lys229. Residue 355–357 (SPF) participates in (6S)-5,6,7,8-tetrahydrofolate binding.

It belongs to the SHMT family. Homodimer. It depends on pyridoxal 5'-phosphate as a cofactor.

The protein localises to the cytoplasm. It carries out the reaction (6R)-5,10-methylene-5,6,7,8-tetrahydrofolate + glycine + H2O = (6S)-5,6,7,8-tetrahydrofolate + L-serine. The protein operates within one-carbon metabolism; tetrahydrofolate interconversion. Its pathway is amino-acid biosynthesis; glycine biosynthesis; glycine from L-serine: step 1/1. Its function is as follows. Catalyzes the reversible interconversion of serine and glycine with tetrahydrofolate (THF) serving as the one-carbon carrier. This reaction serves as the major source of one-carbon groups required for the biosynthesis of purines, thymidylate, methionine, and other important biomolecules. Also exhibits THF-independent aldolase activity toward beta-hydroxyamino acids, producing glycine and aldehydes, via a retro-aldol mechanism. The polypeptide is Serine hydroxymethyltransferase (Edwardsiella ictaluri (strain 93-146)).